An 88-amino-acid chain; its full sequence is Snakin-1 (88 aa).

The N-terminal stretch at 1 to 25 is a signal peptide; it reads MKLFLLTLLLVTLVITPSLIQTTMA.

It belongs to the GASA family. In terms of processing, six disulfide bonds may be present. Expressed in tubers, stems, axillary and young floral buds, sepals, petals, stamens and carpels, but not in roots, stolons, shoot apex meristem or young leaves.

Its subcellular location is the secreted. It is found in the cell wall. Its function is as follows. Has an antimicrobial activity. Causes a rapid aggregation of both Gram-positive and Gram-negative bacteria, but the antimicrobial activity is not correlated with the capacity to aggregate bacteria. The polypeptide is Snakin-1 (SN1) (Solanum tuberosum (Potato)).